Here is a 36-residue protein sequence, read N- to C-terminus: Photosystem I reaction center subunit VIII (36 aa).

A helical transmembrane segment spans residues 8–28; that stretch reads SIFVPLVGLVFPAIAIASLFL.

The protein belongs to the PsaI family.

It is found in the plastid. It localises to the chloroplast thylakoid membrane. Its function is as follows. May help in the organization of the PsaL subunit. The protein is Photosystem I reaction center subunit VIII of Jasminum nudiflorum (Winter jasmine).